The following is a 329-amino-acid chain: Trans-1,2-dihydrobenzene-1,2-diol dehydrogenase (329 aa).

This sequence belongs to the Gfo/Idh/MocA family. As to quaternary structure, homodimer. As to expression, lens, liver and small intestine.

It carries out the reaction (1R,2R)-1,2-dihydrobenzene-1,2-diol + NADP(+) = catechol + NADPH + H(+). The enzyme catalyses D-xylose + NADP(+) = D-xylono-1,5-lactone + NADPH + H(+). With respect to regulation, stimulated by various salts. In Oryctolagus cuniculus (Rabbit), this protein is Trans-1,2-dihydrobenzene-1,2-diol dehydrogenase (DHDH).